Here is a 314-residue protein sequence, read N- to C-terminus: Olfactory receptor 1E5 (314 aa).

Residues methionine 1 to asparagine 25 are Extracellular-facing. An N-linked (GlcNAc...) asparagine glycan is attached at asparagine 5. The chain crosses the membrane as a helical span at residues leucine 26–isoleucine 49. Over arginine 50–threonine 57 the chain is Cytoplasmic. Residues proline 58–proline 79 traverse the membrane as a helical segment. The Extracellular segment spans residues lysine 80–glutamine 100. Residues cysteine 97 and cysteine 189 are joined by a disulfide bond. The chain crosses the membrane as a helical span at residues methionine 101 to tyrosine 120. Residues aspartate 121–methionine 139 are Cytoplasmic-facing. Residues leucine 140–leucine 158 form a helical membrane-spanning segment. Residues histidine 159 to glutamate 196 lie on the Extracellular side of the membrane. Residues tryptophan 197 to alanine 219 form a helical membrane-spanning segment. At arginine 220–lysine 236 the chain is on the cytoplasmic side. The helical transmembrane segment at alanine 237–leucine 260 threads the bilayer. Over cysteine 261–threonine 272 the chain is Extracellular. A glycan (N-linked (GlcNAc...) asparagine) is linked at asparagine 265. Residues valine 273 to leucine 292 form a helical membrane-spanning segment. At arginine 293–leucine 314 the chain is on the cytoplasmic side.

This sequence belongs to the G-protein coupled receptor 1 family.

The protein resides in the cell membrane. Functionally, odorant receptor. The sequence is that of Olfactory receptor 1E5 (OR1E5) from Pan troglodytes (Chimpanzee).